The sequence spans 285 residues: ATP synthase subunit a (285 aa).

Transmembrane regions (helical) follow at residues Thr41–Phe61, Ile102–Ile122, Leu164–Ile184, Val197–Ser217, Leu226–Met246, and Phe252–Leu272.

Belongs to the ATPase A chain family. In terms of assembly, F-type ATPases have 2 components, CF(1) - the catalytic core - and CF(0) - the membrane proton channel. CF(1) has five subunits: alpha(3), beta(3), gamma(1), delta(1), epsilon(1). CF(0) has three main subunits: a(1), b(2) and c(9-12). The alpha and beta chains form an alternating ring which encloses part of the gamma chain. CF(1) is attached to CF(0) by a central stalk formed by the gamma and epsilon chains, while a peripheral stalk is formed by the delta and b chains.

The protein resides in the cell inner membrane. Key component of the proton channel; it plays a direct role in the translocation of protons across the membrane. The polypeptide is ATP synthase subunit a (Pseudoalteromonas translucida (strain TAC 125)).